A 311-amino-acid polypeptide reads, in one-letter code: Forkhead box protein I2 (311 aa).

The segment at residues 99-193 is a DNA-binding region (fork-head); it reads RPPYSYSALI…DNGNFRRKRR (95 aa). 2 disordered regions span residues 188–237 and 263–294; these read FRRK…TTTC and FSLR…QTGA. The segment covering 219-231 has biased composition (low complexity); that stretch reads STPQDPQTSPSPS.

Its subcellular location is the nucleus. In terms of biological role, possible transcriptional activator. In Mus musculus (Mouse), this protein is Forkhead box protein I2.